Reading from the N-terminus, the 368-residue chain is tRNA-specific 2-thiouridylase MnmA (368 aa).

ATP is bound by residues 11–18 (GMSGGVDS) and Met37. Residues 97 to 99 (NPD) form an interaction with target base in tRNA region. Cys102 functions as the Nucleophile in the catalytic mechanism. Cys102 and Cys199 form a disulfide bridge. Gly127 contributes to the ATP binding site. The interval 149–151 (KDQ) is interaction with tRNA. Cys199 acts as the Cysteine persulfide intermediate in catalysis. The segment at 311 to 312 (RY) is interaction with tRNA.

It belongs to the MnmA/TRMU family. In terms of assembly, interacts with TusE.

Its subcellular location is the cytoplasm. It carries out the reaction S-sulfanyl-L-cysteinyl-[protein] + uridine(34) in tRNA + AH2 + ATP = 2-thiouridine(34) in tRNA + L-cysteinyl-[protein] + A + AMP + diphosphate + H(+). Its function is as follows. Catalyzes the 2-thiolation of uridine at the wobble position (U34) of tRNA(Lys), tRNA(Glu) and tRNA(Gln), leading to the formation of s(2)U34, the first step of tRNA-mnm(5)s(2)U34 synthesis. Sulfur is provided by IscS, via a sulfur-relay system. Binds ATP and its substrate tRNAs. This Klebsiella pneumoniae (strain 342) protein is tRNA-specific 2-thiouridylase MnmA.